Consider the following 943-residue polypeptide: Zinc finger BED domain-containing protein 39 (943 aa).

The segment at 1 to 99 (MSSVSSDIDG…DIAMDVSGST (99 aa)) is disordered. Residues 12–21 (PETKRFRIDV) are compositionally biased toward basic and acidic residues. The span at 50 to 72 (SPAAPSSASYRSSNSSVISSSES) shows a compositional bias: low complexity. A compositionally biased stretch (basic and acidic residues) spans 73-85 (PIKDEDVDVHDGQ). The BED-type; degenerate zinc finger occupies 184 to 235 (NKQTPVWKYFVYNKTENLSRCIVGDCTYMLKGPHTSTLACHLKKHTREYSEF). 2 disordered regions span residues 242-315 (YSRT…KEPS) and 328-348 (RQAT…PQLP). The segment covering 262–276 (TLQTQNTPRQTGSPA) has biased composition (polar residues). Residues 277-292 (STCNTNSNTSSSVSSG) show a composition bias toward low complexity. Residues 328–338 (RQATNNSNGSP) show a composition bias toward polar residues.

As to expression, expressed in distal tip cells and in germline cells.

Its subcellular location is the nucleus. It localises to the cytoplasm. Its function is as follows. Regulates the timing and orientation of distal tip cell migration during gonadal development. May act in parallel to cacn-1 and Rac GTPases to control the anterior and posterior migration of distal tip cells. The protein is Zinc finger BED domain-containing protein 39 of Caenorhabditis elegans.